A 267-amino-acid chain; its full sequence is Glutamate racemase (267 aa).

Substrate is bound by residues 9–10 (DS) and 41–42 (YG). Cys72 functions as the Proton donor/acceptor in the catalytic mechanism. 73–74 (NT) is a binding site for substrate. The active-site Proton donor/acceptor is Cys184. 185-186 (TH) contributes to the substrate binding site.

This sequence belongs to the aspartate/glutamate racemases family.

It carries out the reaction L-glutamate = D-glutamate. It participates in cell wall biogenesis; peptidoglycan biosynthesis. Its function is as follows. Provides the (R)-glutamate required for cell wall biosynthesis. The polypeptide is Glutamate racemase (Staphylococcus epidermidis (strain ATCC 12228 / FDA PCI 1200)).